A 948-amino-acid polypeptide reads, in one-letter code: ATPase 8, plasma membrane-type (948 aa).

Topologically, residues 1-64 (MATEFSWDEI…EKSENKFLKF (64 aa)) are cytoplasmic. Residues 65 to 84 (LGFMWNPLSWVMESAAIMAI) form a helical membrane-spanning segment. At 85–96 (VLANGGGKAPDW) the chain is on the extracellular side. Residues 97–117 (QDFIGIMVLLIINSTISFIEE) form a helical membrane-spanning segment. Over 118–246 (NNAGNAAAAL…GHFQKVLTSI (129 aa)) the chain is Cytoplasmic. A helical transmembrane segment spans residues 247–267 (GNFCICSIGLGMLIEILIMYP). Topologically, residues 268-276 (IQHRTYRDG) are extracellular. Residues 277–294 (IDNLLVLLIGGIPIAMPT) form a helical membrane-spanning segment. Topologically, residues 295–646 (VLSVTMAIGS…TSRAIFQRMK (352 aa)) are cytoplasmic. Asp-332 functions as the 4-aspartylphosphate intermediate in the catalytic mechanism. Positions 591 and 595 each coordinate Mg(2+). Residues 647-668 (NYTIYAVSITIRIVLGFMLVAL) traverse the membrane as a helical segment. The Extracellular segment spans residues 669–673 (IWRFD). The chain crosses the membrane as a helical span at residues 674–696 (FAPFMVLIIAILNDGTIMTISKD). The Cytoplasmic portion of the chain corresponds to 697–712 (RVKPSPVPDSWKLNEI). The chain crosses the membrane as a helical span at residues 713-733 (FATGVVLGTYMALTTVLFFWL). Topologically, residues 734–754 (AHDTDFFSKTFGVRSIQGNEE) are extracellular. A helical membrane pass occupies residues 755–775 (ELMAALYLQVSIISQALIFVT). Residues 776–787 (RSRSWSFVERPG) lie on the Cytoplasmic side of the membrane. Residues 788–808 (FLLLIAFVIAQLVATLIAVYA) traverse the membrane as a helical segment. Topologically, residues 809-816 (NWGFARIV) are extracellular. A helical membrane pass occupies residues 817-837 (GCGWGWAGGIWVYSIITYIPL). Residues 838-948 (DILKFIIRYA…IDTIQQHYTV (111 aa)) lie on the Cytoplasmic side of the membrane. Position 884 is a phosphothreonine (Thr-884). Ser-930 is subject to Phosphoserine. The segment at 946-948 (YTV) is interaction with 14-3-3 proteins. Thr-947 carries the phosphothreonine modification.

It belongs to the cation transport ATPase (P-type) (TC 3.A.3) family. Type IIIA subfamily. As to quaternary structure, binds to 14-3-3 proteins. The binding is induced by phosphorylation of Thr-947. Binding to 14-3-3 proteins activates the H(+)-ATPase. As to expression, expressed in guard cells, roots and leaves, and barely in mesophyll cells.

It localises to the membrane. It catalyses the reaction ATP + H2O + H(+)(in) = ADP + phosphate + 2 H(+)(out). The plasma membrane H(+) ATPase of plants and fungi generates a proton gradient that drives the active transport of nutrients by H(+)-symport. The resulting external acidification and/or internal alkinization may mediate growth responses. This Arabidopsis thaliana (Mouse-ear cress) protein is ATPase 8, plasma membrane-type (AHA8).